A 263-amino-acid chain; its full sequence is N-acyl homoserine lactonase AttM (263 aa).

Histidine 103, histidine 105, aspartate 107, histidine 108, histidine 180, aspartate 202, and histidine 247 together coordinate Zn(2+).

This sequence belongs to the metallo-beta-lactamase superfamily. Zn(2+) is required as a cofactor.

It carries out the reaction an N-acyl-L-homoserine lactone + H2O = an N-acyl-L-homoserine + H(+). The sequence is that of N-acyl homoserine lactonase AttM from Azorhizobium caulinodans (strain ATCC 43989 / DSM 5975 / JCM 20966 / LMG 6465 / NBRC 14845 / NCIMB 13405 / ORS 571).